Reading from the N-terminus, the 1483-residue chain is Rho GTPase-activating protein 23 (1483 aa).

The tract at residues 15 to 34 (PEPRPPQLPLGPRDGCSSGR) is disordered. Residues 71–155 (HCILKEEENG…TLELSIMPKD (85 aa)) enclose the PDZ domain. Disordered stretches follow at residues 212–276 (ISAL…PGSR) and 300–345 (AGER…GQEG). The segment covering 316–325 (SQDRLEDVTT) has biased composition (basic and acidic residues). The segment covering 331–342 (CSTSQDALSQLG) has biased composition (polar residues). Serine 361 and serine 372 each carry phosphoserine. Positions 385–407 (PSARTSACPSRDLTQAPPPSGLQ) are disordered. Serine 421 is modified (phosphoserine). 2 disordered regions span residues 448–485 (SLAQ…DHRD) and 508–527 (NLGF…RLGR). Phosphoserine is present on residues serine 515, serine 579, serine 607, and serine 619. Threonine 652 is modified (phosphothreonine). Phosphoserine is present on residues serine 655, serine 658, and serine 673. Residues 684-804 (DIRREGWLYY…WIRAIRENSR (121 aa)) enclose the PH domain. The disordered stretch occupies residues 827–848 (KVSHSSGPKADSSPKGSRGLGG). Lysine 850 participates in a covalent cross-link: Glycyl lysine isopeptide (Lys-Gly) (interchain with G-Cter in SUMO2). 4 disordered regions span residues 860 to 879 (RGLR…VAAP), 1093 to 1150 (FSDD…SWVP), 1171 to 1361 (KRKK…GSRP), and 1419 to 1469 (ELGG…LQGL). The Rho-GAP domain maps to 901 to 1093 (IRLEECQPAT…TLIQHSDWFF (193 aa)). Basic and acidic residues predominate over residues 1099 to 1110 (KGERTPVDDKEP). 2 stretches are compositionally biased toward polar residues: residues 1133–1144 (GSDSTTCSSAKS) and 1236–1248 (SIVS…STMD). The span at 1338-1351 (GSASSSSQESLRPP) shows a compositional bias: low complexity. The segment covering 1440–1457 (SGLSSLESTKARASSAAS) has biased composition (polar residues).

Functionally, GTPase activator for the Rho-type GTPases by converting them to an inactive GDP-bound state. The protein is Rho GTPase-activating protein 23 (Arhgap23) of Mus musculus (Mouse).